The following is a 284-amino-acid chain: Homoserine O-acetyltransferase 2 (284 aa).

The Acyl-thioester intermediate role is filled by C133. 2 residues coordinate substrate: K154 and S178. H220 (proton acceptor) is an active-site residue. E222 is an active-site residue. R234 lines the substrate pocket.

Belongs to the MetA family.

It is found in the cytoplasm. It catalyses the reaction L-homoserine + acetyl-CoA = O-acetyl-L-homoserine + CoA. Its pathway is amino-acid biosynthesis; L-methionine biosynthesis via de novo pathway; O-acetyl-L-homoserine from L-homoserine: step 1/1. In terms of biological role, transfers an acetyl group from acetyl-CoA to L-homoserine, forming acetyl-L-homoserine. This Ilyobacter polytropus (strain ATCC 51220 / DSM 2926 / LMG 16218 / CuHBu1) protein is Homoserine O-acetyltransferase 2.